A 70-amino-acid chain; its full sequence is Conotoxin Im23.3 (70 aa).

Positions 1–22 (MIMRMTLTLFVLVVMTAASASG) are cleaved as a signal peptide. Residues 23 to 28 (DALTEA) constitute a propeptide that is removed on maturation. 3 disulfide bridges follow: C34–C41, C45–C53, and C54–C69.

The protein belongs to the conotoxin K superfamily. Expressed by the venom duct.

It localises to the secreted. Its function is as follows. Neurotoxin that induces excitatory symptoms in mice following intracranial administration. No symptoms are observed after intraperitoneal and intravenous (tail vein) injections. This Conus imperialis (Imperial cone) protein is Conotoxin Im23.3.